A 95-amino-acid chain; its full sequence is Membrane protein insertion and folding monitor (95 aa).

Residues 12 to 32 (LFLVDFFTIILPALTAIGIAF) form a helical membrane-spanning segment. The crucial for elongation arrest stretch occupies residues 86-89 (DEED).

Its subcellular location is the cell membrane. Functionally, sensor protein that up-regulates translation of the secondary membrane protein insertase (MisCB/YqjG) when activity of the primary membrane protein insertase (MisCA/SpoIIIJ) is limited. Acts as a ribosome-nascent chain complex. When the primary membrane protein insertase activity or level is reduced, the membrane insertion of MifM is impaired, which induces arrest of MifM translation and unfolding of the mRNA hairpin. Unfolding leads to translation of the downstream gene, which encodes the secondary membrane protein insertase MisCB/YqjG. Translation arrest of MifM is mediated by interaction of its C-terminal domain with the ribosomal polypeptide exit tunnel. Undergoes multisite stalling, which may allow a sufficient duration of ribosomal stalling and consequently sufficient levels of MisCB/YqjG. The polypeptide is Membrane protein insertion and folding monitor (mifM) (Bacillus subtilis (strain 168)).